A 291-amino-acid polypeptide reads, in one-letter code: MNWLFKKIGLVARQSKPEVVESLLLLSHHLESQGLHVFIDRDSVTRSQAQGLTLIDRSDFGKIVDVAIVLGGDGTMLSVARLLAPYRVPLIGINQGRLGFMTDIPLHQMLDSVSAILSGEFLPEERMLLQSTVVRDGVEIAHHLAFNDIVINRGAMGQMIEFEVFVDNQFVYSQRSDGLIISTPTGSTAYSLASGGPILHPTVPAISLVPICPQSLNNRPIAINDSSEVEFMLTRGIDARVHFDGQAHCDLMELDRVLVRRYRNSLKILHPLGYSYFDMLRQKLHWGERLL.

The Proton acceptor role is filled by Asp-73. Residues 73–74, 147–148, Arg-175, Asp-177, and Gln-246 each bind NAD(+); these read DG and ND.

The protein belongs to the NAD kinase family. A divalent metal cation is required as a cofactor.

The protein resides in the cytoplasm. The catalysed reaction is NAD(+) + ATP = ADP + NADP(+) + H(+). Involved in the regulation of the intracellular balance of NAD and NADP, and is a key enzyme in the biosynthesis of NADP. Catalyzes specifically the phosphorylation on 2'-hydroxyl of the adenosine moiety of NAD to yield NADP. The polypeptide is NAD kinase (Laribacter hongkongensis (strain HLHK9)).